Consider the following 158-residue polypeptide: Mitotic-spindle organizing protein 2 (158 aa).

A Phosphoserine modification is found at S34. Residues 81–158 (AGQRVASDSQ…PGRSPPRSGT (78 aa)) are disordered. Residues 110–119 (KGGGALGGGP) show a composition bias toward gly residues. S152 bears the Phosphoserine mark.

The protein belongs to the MOZART2 family. As to quaternary structure, associates with the gamma-tubulin ring complex (gTuRC) consisting of TUBGCP2, TUBGCP3, TUBGCP4, TUBGCP5 and TUBGCP6 and gamma-tubulin TUBG1 or TUBG2; within the complex, interacts with TUBGCP2; the interaction plays a role in gTuRC activation.

The protein resides in the cytoplasm. It localises to the cytoskeleton. The protein localises to the microtubule organizing center. Its subcellular location is the centrosome. It is found in the spindle. In terms of biological role, required for the recruitment and the assembly of the gamma-tubulin ring complex (gTuRC) at the centrosome. The gTuRC regulates the minus-end nucleation of alpha-beta tubulin heterodimers that grow into microtubule protafilaments, a critical step in centrosome duplication and spindle formation. In Bos taurus (Bovine), this protein is Mitotic-spindle organizing protein 2 (MZT2).